We begin with the raw amino-acid sequence, 438 residues long: Enolase (438 aa).

Substrate is bound by residues His159 and Glu168. The Proton donor role is filled by Glu211. Mg(2+) is bound by residues Asp246, Glu297, and Asp322. Substrate-binding residues include Glu297 and Asp322. Lys347 functions as the Proton acceptor in the catalytic mechanism. Residues 374–377 and Lys398 each bind substrate; that span reads SHRS.

The protein belongs to the enolase family. As to quaternary structure, homodimer. It depends on Mg(2+) as a cofactor.

Its subcellular location is the cytoplasm. It catalyses the reaction (2R)-2-phosphoglycerate = phosphoenolpyruvate + H2O. Its pathway is carbohydrate degradation; glycolysis; pyruvate from D-glyceraldehyde 3-phosphate: step 4/5. The sequence is that of Enolase (emp-7) from Neurospora crassa (strain ATCC 24698 / 74-OR23-1A / CBS 708.71 / DSM 1257 / FGSC 987).